A 602-amino-acid chain; its full sequence is Glycoprotein G (602 aa).

At 1–49 the chain is on the intravirion side; sequence MPAENKKVRFENTTSDKGKIPSKVIKSYYGTMDIKKINEGLLDSKILSA. The helical transmembrane segment at 50–70 threads the bilayer; that stretch reads FNTVIALLGSIVIIVMNIMII. The Virion surface segment spans residues 71-602; sequence QNYTRSTDNQ…FAVKIPEQCT (532 aa). N-linked (GlcNAc...) asparagine; by host glycans are attached at residues Asn72 and Asn159. The stalk stretch occupies residues 96–163; that stretch reads GLADKIGTEI…KIHECNISCP (68 aa). The segment at 177–602 is head; the sequence is GVSNLVGLPN…FAVKIPEQCT (426 aa). 7 disulfides stabilise this stretch: Cys189/Cys601, Cys216/Cys240, Cys282/Cys295, Cys382/Cys395, Cys387/Cys499, Cys493/Cys503, and Cys565/Cys574. Residues Asn306 and Asn378 are each glycosylated (N-linked (GlcNAc...) asparagine; by host). Residues Asn417 and Asn481 are each glycosylated (N-linked (GlcNAc...) asparagine; by host). An N-linked (GlcNAc...) asparagine; by host glycan is attached at Asn529.

Belongs to the paramyxoviruses hemagglutinin-neuraminidase family. As to quaternary structure, homotetramer; disulfide-linked. Interacts with host EFNB2; this interaction allows the virus entry into the host cell. Interacts with host EFNB3; this interaction allows the virus entry into the host cell. Interacts with the fusion glycoprotein; this interaction involves both head and stalk regions of glygoprotein G. Post-translationally, N-glycosylated.

It localises to the virion membrane. It is found in the host cell membrane. Its function is as follows. Interacts with host ephrinB2/EFNB2 or ephrin B3/EFNB3 to provide virion attachment to target cell. This attachment induces virion internalization predominantly through clathrin-mediated endocytosis. The polypeptide is Glycoprotein G (G) (Cynopterus brachyotis (Lesser short-nosed fruit bat)).